Reading from the N-terminus, the 23-residue chain is SIQVIVVTDGERGLIYPPLSNIR.

The protein belongs to the malic enzymes family. As to quaternary structure, homotetramer.

The enzyme catalyses (S)-malate + NADP(+) = pyruvate + CO2 + NADPH. It catalyses the reaction oxaloacetate + H(+) = pyruvate + CO2. The chain is NADP-dependent malic enzyme from Populus euphratica (Euphrates poplar).